A 434-amino-acid polypeptide reads, in one-letter code: L-2-hydroxyglutarate dehydrogenase, mitochondrial (434 aa).

It belongs to the L2HGDH family. It depends on FAD as a cofactor.

Its subcellular location is the mitochondrion. The enzyme catalyses (S)-2-hydroxyglutarate + A = 2-oxoglutarate + AH2. The protein is L-2-hydroxyglutarate dehydrogenase, mitochondrial of Caenorhabditis briggsae.